The chain runs to 748 residues: Catalase-peroxidase (748 aa).

The segment at residues 92–238 (WHSAGTYRIG…LAAVQMGLIY (147 aa)) is a cross-link (tryptophyl-tyrosyl-methioninium (Trp-Tyr) (with M-264)). His-93 serves as the catalytic Proton acceptor. The tryptophyl-tyrosyl-methioninium (Tyr-Met) (with W-92) cross-link spans 238–264 (YVNPEGPDGNPDPIASARDIRDTFARM). His-279 is a binding site for heme b.

The protein belongs to the peroxidase family. Peroxidase/catalase subfamily. As to quaternary structure, homodimer or homotetramer. It depends on heme b as a cofactor. Post-translationally, formation of the three residue Trp-Tyr-Met cross-link is important for the catalase, but not the peroxidase activity of the enzyme.

The catalysed reaction is H2O2 + AH2 = A + 2 H2O. It carries out the reaction 2 H2O2 = O2 + 2 H2O. In terms of biological role, bifunctional enzyme with both catalase and broad-spectrum peroxidase activity. The chain is Catalase-peroxidase from Xanthomonas euvesicatoria pv. vesicatoria (strain 85-10) (Xanthomonas campestris pv. vesicatoria).